The primary structure comprises 423 residues: Histidine--tRNA ligase 2 (423 aa).

This sequence belongs to the class-II aminoacyl-tRNA synthetase family. Homodimer.

The protein resides in the cytoplasm. The enzyme catalyses tRNA(His) + L-histidine + ATP = L-histidyl-tRNA(His) + AMP + diphosphate + H(+). This chain is Histidine--tRNA ligase 2, found in Bacillus anthracis.